The following is a 443-amino-acid chain: Protein king tubby (443 aa).

Disordered regions lie at residues 57 to 85 and 98 to 189; these read TNGS…LSTI and HELE…ESEG. Residues 68 to 85 show a composition bias toward polar residues; the sequence is AVNTSRNHSNNMRSLSTI. The segment covering 113 to 128 has biased composition (low complexity); sequence QHQQSASHSANSTQSQ. The residue at position 136 (serine 136) is a Phosphoserine. The span at 148-160 shows a compositional bias: low complexity; sequence NRNVAAAAPVRPA. Over residues 177–186 the composition is skewed to gly residues; sequence NGTGNGTGGE.

It belongs to the TUB family.

It localises to the cytoplasm. The protein localises to the nucleus. It is found in the cell projection. Its subcellular location is the cilium membrane. The protein resides in the rhabdomere. The chain is Protein king tubby from Drosophila yakuba (Fruit fly).